The following is a 74-amino-acid chain: Large ribosomal subunit protein bL31 (74 aa).

Zn(2+)-binding residues include cysteine 16, cysteine 18, cysteine 37, and cysteine 40.

Belongs to the bacterial ribosomal protein bL31 family. Type A subfamily. As to quaternary structure, part of the 50S ribosomal subunit. It depends on Zn(2+) as a cofactor.

Functionally, binds the 23S rRNA. The protein is Large ribosomal subunit protein bL31 of Nitrosomonas europaea (strain ATCC 19718 / CIP 103999 / KCTC 2705 / NBRC 14298).